Reading from the N-terminus, the 503-residue chain is ATP synthase subunit alpha (503 aa).

An ATP-binding site is contributed by 169 to 176 (GDRKTGKT).

The protein belongs to the ATPase alpha/beta chains family. As to quaternary structure, F-type ATPases have 2 components, CF(1) - the catalytic core - and CF(0) - the membrane proton channel. CF(1) has five subunits: alpha(3), beta(3), gamma(1), delta(1), epsilon(1). CF(0) has three main subunits: a(1), b(2) and c(9-12). The alpha and beta chains form an alternating ring which encloses part of the gamma chain. CF(1) is attached to CF(0) by a central stalk formed by the gamma and epsilon chains, while a peripheral stalk is formed by the delta and b chains.

Its subcellular location is the cell membrane. It carries out the reaction ATP + H2O + 4 H(+)(in) = ADP + phosphate + 5 H(+)(out). In terms of biological role, produces ATP from ADP in the presence of a proton gradient across the membrane. The alpha chain is a regulatory subunit. This is ATP synthase subunit alpha from Lactobacillus delbrueckii subsp. bulgaricus (strain ATCC 11842 / DSM 20081 / BCRC 10696 / JCM 1002 / NBRC 13953 / NCIMB 11778 / NCTC 12712 / WDCM 00102 / Lb 14).